Here is a 645-residue protein sequence, read N- to C-terminus: Macrolide export ATP-binding/permease protein MacB (645 aa).

In terms of domain architecture, ABC transporter spans 6–244 (IELKDVTRYY…EAPQYRYARK (239 aa)). Residue 42 to 49 (GQSGSGKS) participates in ATP binding. The next 4 membrane-spanning stretches (helical) occupy residues 271–291 (ALTLLGVVIGVSAVVAMLAIG), 520–540 (FSILLGSVAAISLLVGGIGVM), 577–597 (VVGGLGGIAGVAIGFGIVFII), and 608–628 (PLPAILAFSSALGTGLVFGLL).

This sequence belongs to the ABC transporter superfamily. Macrolide exporter (TC 3.A.1.122) family. As to quaternary structure, homodimer.

The protein resides in the cell inner membrane. Its function is as follows. Non-canonical ABC transporter that contains transmembrane domains (TMD), which form a pore in the inner membrane, and an ATP-binding domain (NBD), which is responsible for energy generation. Confers resistance against macrolides. The sequence is that of Macrolide export ATP-binding/permease protein MacB from Hyphomonas neptunium (strain ATCC 15444).